A 662-amino-acid polypeptide reads, in one-letter code: MVHVRYGGQNGEQYELAISENHIVVRTESRSSLISDRPFEAAPVSSQARNILNQFELSTRFSQAGVEVLHVKEPSQDGALRDTAREILNQEPEVQFAGRVLIDPVSQQPIVYTENLFVKFGHEEDVSFCQEILGRYGLTIKRQLEYARNAYFVSAPPNTGLAIFDIAERLLNEESVELCHPELVREFRQRQAFSQQWHLKETTIGGKTIKAHANVEAAWKLSDGTGTIIAIIDDGVDVDHEEFRSSGKIVAPRDVTRKTNFPTPGNRDNHGTACAGVACGNGNFGASGVAPGAKLMPIRFVSALGSQDEADSFVWAAQNGADVISCSWGPPDGTWWDDKDPLHKQKVPLPDSTRLAMDYAINKGRNGKGCVILFAAGNGNESVDNDGYASYEKVIAVAACNDFGTRSAYSDFGQAVWCAFPSNNGNPSQTPGIWTADRSGVVGYNSGSTNLGDQAGNYTNSFGGTSSACPGAAGVAALILSRNPNLRWDEVRDIIKRSCDRIDPVGGNYNAEGRSPFYGYGRINALKAVELALPAQPEPVSIFTAVQDVPINDLQTSQLSLAIANTNPIKSIKVTVDIEHTYIGDLIVSLNPPGECGVLPIILHDRKGGGADDIKQTYDEVSTPGLTALKGKIPQGTWTLEVADKAQADTGKIRSLTIELGF.

Residues 196–529 (QWHLKETTIG…YGRINALKAV (334 aa)) form the Peptidase S8 domain. Catalysis depends on charge relay system residues D233, H270, and S466. The P/Homo B domain maps to 535-662 (AQPEPVSIFT…IRSLTIELGF (128 aa)).

Belongs to the peptidase S8 family.

The protein localises to the cytoplasm. Functionally, degrades phycobiliproteins in vitro. Has a substrate specificity similar to that of trypsin. The polypeptide is Calcium-dependent protease (prcA) (Nostoc sp. (strain PCC 7120 / SAG 25.82 / UTEX 2576)).